We begin with the raw amino-acid sequence, 233 residues long: Lipoprotein-releasing system ATP-binding protein LolD (233 aa).

The ABC transporter domain occupies 6–233; the sequence is LQCDNLCKRY…TAELSLMGAE (228 aa). Residue 42–49 participates in ATP binding; it reads GSSGSGKS.

The protein belongs to the ABC transporter superfamily. Lipoprotein translocase (TC 3.A.1.125) family. As to quaternary structure, the complex is composed of two ATP-binding proteins (LolD) and two transmembrane proteins (LolC and LolE).

It is found in the cell inner membrane. Functionally, part of the ABC transporter complex LolCDE involved in the translocation of mature outer membrane-directed lipoproteins, from the inner membrane to the periplasmic chaperone, LolA. Responsible for the formation of the LolA-lipoprotein complex in an ATP-dependent manner. Such a release is dependent of the sorting-signal (absence of an Asp at position 2 of the mature lipoprotein) and of LolA. In Escherichia coli (strain K12), this protein is Lipoprotein-releasing system ATP-binding protein LolD.